The sequence spans 270 residues: Glucan endo-1,3-beta-glucosidase (270 aa).

Residues 1–18 (MNAFTFPLLLAFCAFAHG) form the signal peptide. In terms of domain architecture, GH16 spans 22–270 (LDWEDEFNGG…VEYVKKWTWN (249 aa)). The active-site Nucleophile is glutamate 137. Catalysis depends on glutamate 142, which acts as the Proton donor.

This sequence belongs to the glycosyl hydrolase 16 family.

Its subcellular location is the secreted. The catalysed reaction is Hydrolysis of (1-&gt;3)-beta-D-glucosidic linkages in (1-&gt;3)-beta-D-glucans.. With respect to regulation, ca(2+) does not affect the enzyme activity nor the thermostability. Other cations, such as Mg(2+), Mn(2+), Cu(2+), Zn(2+), Ag(+) or Hg(2+) do not cause any serious adverse effect on the activity. Also no significant change in the activity in response to the addition of 1 mM EDTA. In terms of biological role, hydrolyzes laminarin majorily to glucose (G1), laminaribiose (L2), laminaritriose (L3), laminaritetraose (L4) and laminaripentaose (L5). Hydrolyzes laminarioligosaccharides L3, L4, L5 and laminarihexaose (L6) to G1, L2 and L3. Hardly hydrolyzes L2. Does not hydrolyze lichenan, pustulan, carboxymethyl cellulose, locust bean gum or soluble starch. The chain is Glucan endo-1,3-beta-glucosidase from Cryptopygus antarcticus (Antarctic springtail).